The chain runs to 288 residues: Polyamine aminopropyltransferase (288 aa).

Residues 9–238 (ETLHDQFGQY…GIMTFAWATD (230 aa)) enclose the PABS domain. Residue Gln33 coordinates S-methyl-5'-thioadenosine. 2 residues coordinate spermidine: His64 and Asp88. Residues Glu108 and 140–141 (DG) each bind S-methyl-5'-thioadenosine. Residue Asp158 is the Proton acceptor of the active site. 158 to 161 (DCTD) contacts spermidine. Pro165 contributes to the S-methyl-5'-thioadenosine binding site.

The protein belongs to the spermidine/spermine synthase family. In terms of assembly, homodimer or homotetramer.

The protein localises to the cytoplasm. It catalyses the reaction S-adenosyl 3-(methylsulfanyl)propylamine + putrescine = S-methyl-5'-thioadenosine + spermidine + H(+). The protein operates within amine and polyamine biosynthesis; spermidine biosynthesis; spermidine from putrescine: step 1/1. In terms of biological role, catalyzes the irreversible transfer of a propylamine group from the amino donor S-adenosylmethioninamine (decarboxy-AdoMet) to putrescine (1,4-diaminobutane) to yield spermidine. This chain is Polyamine aminopropyltransferase, found in Escherichia coli O17:K52:H18 (strain UMN026 / ExPEC).